Reading from the N-terminus, the 473-residue chain is Sulfhydrylase-like protein lolC1 (473 aa).

An N6-(pyridoxal phosphate)lysine modification is found at K226.

The protein belongs to the trans-sulfuration enzymes family. It depends on pyridoxal 5'-phosphate as a cofactor.

It functions in the pathway alkaloid biosynthesis. Functionally, sulfhydrylase-like protein; part of the gene cluster that mediates the biosynthesis of loline alkaloids, potent insecticidal agents composed of a pyrrolizidine ring system and an uncommon ether bridge linking carbons 2 and 7. Lolines are structurally differentiated by the various modifications of the L-amino group and include norloline, loline, N-methylloline, N-acetylloline, N-acetylnorloline, and N-formylloline. The first committed step is the condensation of O-acetyl-L-homoserine (derived from L-aspartic acid) and L-proline, probably catalyzed by the gamma-type pyridoxal 5'-phosphate(PLP)-dependent enzyme lolC, to give the diamino diacid, NACPP. Ensuing cyclization, decarboxylation, and acetylation steps yield 1-exo-acetamidopyrrolizidine (AcAP). LolO is required for installation of the ether bridge upon the pathway intermediate, 1-exo-acetamidopyrrolizidine (AcAP). In sequential 2-oxoglutarate- and O(2)-consuming steps, lolO removes hydrogens from C2 and C7 of AcAP to form both carbon-oxygen bonds in N-acetylnorloline (NANL), the precursor to all other lolines. The enzymes lolD, lolE, lolF and lolT have also been proposed to be involved in the ether-bridge installation. Further processing of the exocyclic moiety of NANL by fungal N-acetamidase (LolN), methyltransferase (LolM), and cytochrome P450 (LolP) enzymes, with occasional involvement of a plant acetyltransferase, generates the other known lolines. LolN transforms NANL to norlonine which is monomethylated and dimethylated to respectively lonine and N-methyllonine (NML) by lolM. LolP catalyzes hydroxylation of the methyl group in N-methylloline (NML) and further oxygenation to N-formylloline (NFL). A plant acetyltransferase is responsible for the acetylation of loline to form N-acetylloline (NAL). LolA might interact with aspartate kinase to prevent feedback inhibition of its activity by these end products and thereby promote production of L-homoserine from L-aspartate. The chain is Sulfhydrylase-like protein lolC1 from Epichloe uncinata (Endophyte fungus).